The sequence spans 251 residues: D-aminoacyl-tRNA deacylase (251 aa).

This sequence belongs to the DtdA deacylase family. As to quaternary structure, monomer. It depends on Zn(2+) as a cofactor.

The enzyme catalyses a D-aminoacyl-tRNA + H2O = a tRNA + a D-alpha-amino acid + H(+). It catalyses the reaction glycyl-tRNA(Ala) + H2O = tRNA(Ala) + glycine + H(+). Functionally, D-aminoacyl-tRNA deacylase with broad substrate specificity. By recycling D-aminoacyl-tRNA to D-amino acids and free tRNA molecules, this enzyme counteracts the toxicity associated with the formation of D-aminoacyl-tRNA entities in vivo. The protein is D-aminoacyl-tRNA deacylase of Pyrobaculum aerophilum (strain ATCC 51768 / DSM 7523 / JCM 9630 / CIP 104966 / NBRC 100827 / IM2).